The primary structure comprises 168 residues: UPF0303 protein YE1367 (168 aa).

It belongs to the UPF0303 family.

The polypeptide is UPF0303 protein YE1367 (Yersinia enterocolitica serotype O:8 / biotype 1B (strain NCTC 13174 / 8081)).